The sequence spans 232 residues: MEVQVWLRWYTRILDDFGFDRRADEESASYLDAFLREHGCLRVDDIDVPSSDFIVFGAGPSLRSHLKRFRALDEPMTVISADGATTALLEEDVLPDIIVTDLDGKMEDIIEANRQGAVVVVHAHGNNLPALRRYLPLLQNIIGTTQSIPHGCLHNFGGFTDGDRAVFLAAALGAGRIVLAGMDFGEVVTRYSRPDMDSELGPADPVKRLKLEYASRLIDWLERNGDVRIERW.

The protein belongs to the archaeal 6-HMPDK family. The cofactor is Mg(2+).

It carries out the reaction 6-hydroxymethyl-7,8-dihydropterin + ATP = (7,8-dihydropterin-6-yl)methyl diphosphate + AMP + H(+). It functions in the pathway cofactor biosynthesis; 5,6,7,8-tetrahydromethanopterin biosynthesis. Functionally, catalyzes the transfer of diphosphate from ATP to 6-hydroxymethyl-7,8-dihydropterin (6-HMD), leading to 6-hydroxymethyl-7,8-dihydropterin diphosphate (6-HMDP). This is 6-hydroxymethyl-7,8-dihydropterin pyrophosphokinase from Methanothermobacter thermautotrophicus (strain ATCC 29096 / DSM 1053 / JCM 10044 / NBRC 100330 / Delta H) (Methanobacterium thermoautotrophicum).